The chain runs to 312 residues: Homeobox-leucine zipper protein ATHB-5 (312 aa).

The tract at residues 1-33 is disordered; sequence MKRSRGSSDSLSGFLPIRHSTTDKQISPRPTTT. Residues 23–33 show a composition bias toward polar residues; it reads DKQISPRPTTT. Positions 69-128 form a DNA-binding region, homeobox; it reads AAEKKRRLGVEQVKALEKNFEIDNKLEPERKVKLAQELGLQPRQVAIWFQNRRARWKTKQ. Residues 129–164 are leucine-zipper; sequence LERDYGVLKSNFDALKRNRDSLQRDNDSLLGQIKEL.

Belongs to the HD-ZIP homeobox family. Class I subfamily. Interacts with DNA as homodimer. In terms of tissue distribution, widely expressed.

It localises to the nucleus. Probable transcription factor that acts as a positive regulator of ABA-responsiveness, mediating the inhibitory effect of ABA on growth during seedling establishment. Binds to the DNA sequence 5'-CAATNATTG-3'. The chain is Homeobox-leucine zipper protein ATHB-5 (ATHB-5) from Arabidopsis thaliana (Mouse-ear cress).